The chain runs to 214 residues: Thymidylate kinase (214 aa).

7–14 (GIDGAGKS) contributes to the ATP binding site.

This sequence belongs to the thymidylate kinase family.

The catalysed reaction is dTMP + ATP = dTDP + ADP. Phosphorylation of dTMP to form dTDP in both de novo and salvage pathways of dTTP synthesis. The chain is Thymidylate kinase from Chlorobaculum tepidum (strain ATCC 49652 / DSM 12025 / NBRC 103806 / TLS) (Chlorobium tepidum).